The sequence spans 661 residues: 3-hydroxypropionyl-coenzyme A synthetase (661 aa).

Asp526 is an active-site residue. Lys617 bears the N6-acetyllysine mark.

The protein belongs to the ATP-dependent AMP-binding enzyme family. As to quaternary structure, homotetramer.

It catalyses the reaction 3-hydroxypropanoate + ATP + CoA = 3-hydroxypropanoyl-CoA + AMP + diphosphate. Functionally, plays a role in the autotrophic CO(2) fixation pathway. Activates 3-hydroxypropionate to its CoA ester. Can also activate propionate, and to a lesser extent acrylate, acetate and butyrate. The sequence is that of 3-hydroxypropionyl-coenzyme A synthetase from Metallosphaera sedula (strain ATCC 51363 / DSM 5348 / JCM 9185 / NBRC 15509 / TH2).